The sequence spans 378 residues: CST complex subunit STN1 (378 aa).

Residues 8-195 (MECESSPREE…KVYDQPFRNP (188 aa)) form an interaction with CTC1 region. Positions 64–165 (VDIMGAVISV…EICANIYYKV (102 aa)) form a DNA-binding region, OB. 2 winged helix-turn-helix (wHTH) regions span residues 201 to 305 (EALN…YVTT) and 306 to 378 (KDKD…YAAF).

The protein belongs to the STN1 family. In terms of assembly, component of the CST complex, composed of TEN1/C17orf106, CTC1/C17orf68 and STN1; in the complex interacts directly with TEN1 and CTC1. Interacts with ACD/TPP1. Interacts with POT1 and POLA1.

The protein localises to the nucleus. It is found in the chromosome. Its subcellular location is the telomere. In terms of biological role, component of the CST complex proposed to act as a specialized replication factor promoting DNA replication under conditions of replication stress or natural replication barriers such as the telomere duplex. The CST complex binds single-stranded DNA with high affinity in a sequence-independent manner, while isolated subunits bind DNA with low affinity by themselves. Initially the CST complex has been proposed to protect telomeres from DNA degradation. However, the CST complex has been shown to be involved in several aspects of telomere replication. The CST complex inhibits telomerase and is involved in telomere length homeostasis; it is proposed to bind to newly telomerase-synthesized 3' overhangs and to terminate telomerase action implicating the association with the ACD:POT1 complex thus interfering with its telomerase stimulation activity. The CST complex is also proposed to be involved in fill-in synthesis of the telomeric C-strand probably implicating recruitment and activation of DNA polymerase alpha. The CST complex facilitates recovery from many forms of exogenous DNA damage; seems to be involved in the re-initiation of DNA replication at repaired forks and/or dormant origins. Required for efficicient replication of the duplex region of the telomere. Promotes efficient replication of lagging-strand telomeres. Promotes general replication start following replication-fork stalling implicating new origin firing. May be in involved in C-strand fill-in during late S/G2 phase independent of its role in telomere duplex replication. The polypeptide is CST complex subunit STN1 (Mus musculus (Mouse)).